The following is a 205-amino-acid chain: Outer-membrane lipoprotein carrier protein (205 aa).

An N-terminal signal peptide occupies residues Met-1–Ala-21.

This sequence belongs to the LolA family. Monomer.

It localises to the periplasm. Its function is as follows. Participates in the translocation of lipoproteins from the inner membrane to the outer membrane. Only forms a complex with a lipoprotein if the residue after the N-terminal Cys is not an aspartate (The Asp acts as a targeting signal to indicate that the lipoprotein should stay in the inner membrane). The chain is Outer-membrane lipoprotein carrier protein from Francisella philomiragia subsp. philomiragia (strain ATCC 25017 / CCUG 19701 / FSC 153 / O#319-036).